The following is a 183-amino-acid chain: 2-C-methyl-D-erythritol 2,4-cyclodiphosphate synthase (183 aa).

A divalent metal cation is bound by residues aspartate 8 and histidine 10. Residues 8–10 and 34–35 contribute to the 4-CDP-2-C-methyl-D-erythritol 2-phosphate site; these read DVH and HS. Histidine 42 serves as a coordination point for a divalent metal cation. 4-CDP-2-C-methyl-D-erythritol 2-phosphate contacts are provided by residues 56–58, 61–65, 132–135, and phenylalanine 139; these read DIG, FPDTD, and TTEE.

It belongs to the IspF family. In terms of assembly, homotrimer. A divalent metal cation serves as cofactor.

The enzyme catalyses 4-CDP-2-C-methyl-D-erythritol 2-phosphate = 2-C-methyl-D-erythritol 2,4-cyclic diphosphate + CMP. The protein operates within isoprenoid biosynthesis; isopentenyl diphosphate biosynthesis via DXP pathway; isopentenyl diphosphate from 1-deoxy-D-xylulose 5-phosphate: step 4/6. Functionally, involved in the biosynthesis of isopentenyl diphosphate (IPP) and dimethylallyl diphosphate (DMAPP), two major building blocks of isoprenoid compounds. Catalyzes the conversion of 4-diphosphocytidyl-2-C-methyl-D-erythritol 2-phosphate (CDP-ME2P) to 2-C-methyl-D-erythritol 2,4-cyclodiphosphate (ME-CPP) with a corresponding release of cytidine 5-monophosphate (CMP). The chain is 2-C-methyl-D-erythritol 2,4-cyclodiphosphate synthase from Lachnospira eligens (strain ATCC 27750 / DSM 3376 / VPI C15-48 / C15-B4) (Eubacterium eligens).